Reading from the N-terminus, the 715-residue chain is Forkhead box protein P2 (715 aa).

Residues 1–28 show a composition bias toward polar residues; that stretch reads MMQESATETISNSSMNQNGMSTLSSQLD. 2 disordered regions span residues 1-46 and 281-339; these read MMQE…EVST and DNGI…TGAS. The segment covering 292-305 has biased composition (low complexity); that stretch reads TTNNSSSTTSSNTS. Basic and acidic residues predominate over residues 326 to 337; that stretch reads ARRDSSSHEETG. The C2H2-type zinc finger occupies 346-371; that stretch reads GVCKWPGCESICEDFGQFLKHLNNEH. A leucine-zipper region spans residues 388–409; that stretch reads VQQLEIQLSKERERLQAMMTHL. The tract at residues 422-426 is CTBP1-binding; sequence PLNLV. Low complexity predominate over residues 438–459; that stretch reads TSPQSLPQTPTTPTAPVTPITQ. The interval 438–465 is disordered; sequence TSPQSLPQTPTTPTAPVTPITQGPSVIT. A DNA-binding region (fork-head) is located at residues 504–594; that stretch reads RPPFTYATLI…SQKITGSPTL (91 aa). Disordered stretches follow at residues 649–668 and 678–715; these read LDHI…QPHI and VIAE…EDLE. Residues 699-715 show a composition bias toward acidic residues; that stretch reads LEDDREIEEEPLSEDLE.

As to quaternary structure, forms homodimers and heterodimers with FOXP1 and FOXP4. Dimerization is required for DNA-binding. Interacts with CTBP1. Interacts with FOXP1. Isoform 1 and isoform 3 interact with TBR1. Interacts with ZMYM2. Isoform 1 and isoform 6 are expressed in adult and fetal brain, caudate nucleus and lung.

It localises to the nucleus. In terms of biological role, transcriptional repressor that may play a role in the specification and differentiation of lung epithelium. May also play a role in developing neural, gastrointestinal and cardiovascular tissues. Can act with CTBP1 to synergistically repress transcription but CTPBP1 is not essential. Plays a role in synapse formation by regulating SRPX2 levels. Involved in neural mechanisms mediating the development of speech and language. This is Forkhead box protein P2 (FOXP2) from Homo sapiens (Human).